Here is a 376-residue protein sequence, read N- to C-terminus: Serpin B9 (376 aa).

M1 is modified (N-acetylmethionine).

This sequence belongs to the serpin family. Ov-serpin subfamily.

The protein resides in the cytoplasm. Functionally, granzyme B inhibitor. This is Serpin B9 (SERPINB9) from Homo sapiens (Human).